Here is a 209-residue protein sequence, read N- to C-terminus: Pyrrolidone-carboxylate peptidase (209 aa).

Catalysis depends on residues glutamate 79, cysteine 142, and histidine 164.

Belongs to the peptidase C15 family. In terms of assembly, homotetramer.

It localises to the cytoplasm. It catalyses the reaction Release of an N-terminal pyroglutamyl group from a polypeptide, the second amino acid generally not being Pro.. Removes 5-oxoproline from various penultimate amino acid residues except L-proline. The sequence is that of Pyrrolidone-carboxylate peptidase from Saccharolobus islandicus (strain Y.N.15.51 / Yellowstone #2) (Sulfolobus islandicus).